Consider the following 287-residue polypeptide: Probable endonuclease 4 (287 aa).

The Zn(2+) site is built by histidine 69, histidine 109, glutamate 144, aspartate 178, histidine 181, histidine 215, aspartate 228, histidine 230, and glutamate 260.

Belongs to the AP endonuclease 2 family. Zn(2+) serves as cofactor.

The enzyme catalyses Endonucleolytic cleavage to 5'-phosphooligonucleotide end-products.. Its function is as follows. Endonuclease IV plays a role in DNA repair. It cleaves phosphodiester bonds at apurinic or apyrimidinic (AP) sites, generating a 3'-hydroxyl group and a 5'-terminal sugar phosphate. The polypeptide is Probable endonuclease 4 (Thermotoga sp. (strain RQ2)).